The chain runs to 154 residues: Cysteine-rich DPF motif domain-containing protein 1 (154 aa).

The protein belongs to the CDPF1 family.

The chain is Cysteine-rich DPF motif domain-containing protein 1 from Drosophila melanogaster (Fruit fly).